The primary structure comprises 522 residues: Ribonuclease Y (522 aa).

A helical transmembrane segment spans residues 3 to 23; the sequence is ELIMYILATAVVSIGVGIVAG. The region spanning 212–272 is the KH domain; sequence CVSIFNIESD…VRREVARLSL (61 aa). Residues 338–431 enclose the HD domain; sequence LLQHSREVAK…VQVCDAISGA (94 aa).

The protein belongs to the RNase Y family.

Its subcellular location is the cell membrane. Its function is as follows. Endoribonuclease that initiates mRNA decay. The protein is Ribonuclease Y of Cytophaga hutchinsonii (strain ATCC 33406 / DSM 1761 / CIP 103989 / NBRC 15051 / NCIMB 9469 / D465).